The sequence spans 272 residues: Phosphoglycolate phosphatase 1 (272 aa).

D19 (nucleophile) is an active-site residue. Residues D19, D21, and D182 each contribute to the Mg(2+) site.

Belongs to the HAD-like hydrolase superfamily. CbbY/CbbZ/Gph/YieH family. The cofactor is Mg(2+).

The enzyme catalyses 2-phosphoglycolate + H2O = glycolate + phosphate. It functions in the pathway organic acid metabolism; glycolate biosynthesis; glycolate from 2-phosphoglycolate: step 1/1. Its function is as follows. Specifically catalyzes the dephosphorylation of 2-phosphoglycolate. Is involved in the dissimilation of the intracellular 2-phosphoglycolate formed during the DNA repair of 3'-phosphoglycolate ends, a major class of DNA lesions induced by oxidative stress. The sequence is that of Phosphoglycolate phosphatase 1 from Pseudomonas aeruginosa (strain ATCC 15692 / DSM 22644 / CIP 104116 / JCM 14847 / LMG 12228 / 1C / PRS 101 / PAO1).